A 165-amino-acid polypeptide reads, in one-letter code: Lipoprotein signal peptidase (165 aa).

3 helical membrane passes run 9-29 (PFLWISAVAFFTDLITKLAVV), 65-85 (WQKYFFILLALVVSFMILFFL), and 97-119 (TGYALMVGGALANAADRAYHGFV). Catalysis depends on residues D121 and D139. A helical transmembrane segment spans residues 134–154 (VFNIADVAICIGAGLLAIDAF).

Belongs to the peptidase A8 family.

It localises to the cell inner membrane. It carries out the reaction Release of signal peptides from bacterial membrane prolipoproteins. Hydrolyzes -Xaa-Yaa-Zaa-|-(S,diacylglyceryl)Cys-, in which Xaa is hydrophobic (preferably Leu), and Yaa (Ala or Ser) and Zaa (Gly or Ala) have small, neutral side chains.. The protein operates within protein modification; lipoprotein biosynthesis (signal peptide cleavage). In terms of biological role, this protein specifically catalyzes the removal of signal peptides from prolipoproteins. The protein is Lipoprotein signal peptidase of Histophilus somni (strain 129Pt) (Haemophilus somnus).